We begin with the raw amino-acid sequence, 329 residues long: Formimidoylglutamase (329 aa).

The Mn(2+) site is built by His133, Asp159, His161, Asp163, Asp253, and Asp255.

This sequence belongs to the arginase family. Mn(2+) serves as cofactor.

It carries out the reaction N-formimidoyl-L-glutamate + H2O = formamide + L-glutamate. It participates in amino-acid degradation; L-histidine degradation into L-glutamate; L-glutamate from N-formimidoyl-L-glutamate (hydrolase route): step 1/1. In terms of biological role, catalyzes the conversion of N-formimidoyl-L-glutamate to L-glutamate and formamide. This chain is Formimidoylglutamase, found in Streptococcus gordonii (strain Challis / ATCC 35105 / BCRC 15272 / CH1 / DL1 / V288).